A 571-amino-acid chain; its full sequence is Zinc metalloproteinase-disintegrin-like jararhagin (571 aa).

The propeptide occupies 1 to 150; sequence ATRPKGAVQP…KKASQLAFTA (150 aa). At glutamate 151 the chain carries Pyrrolidone carboxylic acid (Glu). The 197-residue stretch at 159 to 355 folds into the Peptidase M12B domain; that stretch reads KYIEFFVVVD…HNPECIINEP (197 aa). Positions 162 and 246 each coordinate Ca(2+). Disulfide bonds link cysteine 270-cysteine 350, cysteine 310-cysteine 334, and cysteine 312-cysteine 317. A Zn(2+)-binding site is contributed by histidine 295. Glutamate 296 is an active-site residue. Zn(2+) is bound by residues histidine 299 and histidine 305. An N-linked (GlcNAc...) asparagine glycan is attached at asparagine 333. Residues cysteine 350, asparagine 353, valine 365, asparagine 368, leucine 370, glutamate 372, glutamate 375, and aspartate 378 each coordinate Ca(2+). The 87-residue stretch at 363–449 folds into the Disintegrin domain; it reads PPVCGNELLE…ECPADVFHKN (87 aa). 22 disulfides stabilise this stretch: cysteine 366–cysteine 385, cysteine 366–cysteine 395, cysteine 377–cysteine 390, cysteine 377–cysteine 395, cysteine 379–cysteine 385, cysteine 389–cysteine 412, cysteine 403–cysteine 409, cysteine 408–cysteine 434, cysteine 421–cysteine 441, cysteine 428–cysteine 453, cysteine 428–cysteine 460, cysteine 453–cysteine 465, cysteine 460–cysteine 465, cysteine 472–cysteine 487, cysteine 472–cysteine 522, cysteine 487–cysteine 533, cysteine 500–cysteine 510, cysteine 510–cysteine 517, cysteine 517–cysteine 559, cysteine 522–cysteine 533, cysteine 553–cysteine 564, and cysteine 559–cysteine 564. Residues 427–429 carry the D/ECD-tripeptide motif; sequence ECD. Residues aspartate 429, proline 430, glutamate 432, aspartate 444, and valine 445 each coordinate Ca(2+).

Belongs to the venom metalloproteinase (M12B) family. P-III subfamily. P-IIIb sub-subfamily. Monomer (Jararhagin and Jararhagin-C) and dimer (Jaracetin). The cofactor is Zn(2+). Post-translationally, the N-terminus of Jararhagin is blocked. Expressed by the venom gland.

The protein localises to the secreted. It catalyses the reaction Cleavage of 10-His-|-Leu-11, 14-Ala-|-Leu-15, 16-Tyr-|-Leu-17 and 24-Phe-|-Phe-25 bonds in insulin B chain.. Inhibited by EDTA, 1,10 phenanthroline and batimastat (a peptidomimetic MMP inhibitor). Snake venom zinc metalloproteinase-disintegrin-like jararhagin: causes hemorrhage. This is the result of the degradation of sub-endothelial matrix proteins leading to the disruption of the blood vessel endothelium, with accompanying disturbances in platelet function. It is able to degrade von Willebrand factor (vWF) and it hydrolyzes the alpha-chain of fibrinogen (FGA) while leaving the beta and gamma chains unaffected. It inhibits collagen-induced platelet aggregation through the binding to alpha-2/beta-1 integrin (ITGA2/ITGB1) (collagen receptor), and it cleaves the beta-1 subunit of the same integrin, inhibiting platelet interaction and ultimately causing impairment of signal transduction. It has inability to be affected by the plasma inhibitor alpha(2)-macroglobulin. In fibroblasts, it functions as a collagen-mimetic substrate and, in endothelial cells, it causes apoptosis and indirectly inhibits cell proliferation by release of angiostatin-like compounds. It induces a strong pro-inflammatory response characterized by intense leukocyte accumulation and release of cytokines at the site of the injection. Although hemorrhage and edema are a response to the direct effect of this toxin, jararhagin-induced inflammation and necrosis are dependent on macrophages and key pro-inflammatory cytokines or their receptors. It also possesses anti-tumorgenic properties. In terms of biological role, the monomeric form inhibits collagen- and ADP-induced platelet aggregation, but has no effect on glycoprotein Ib-IX-dependent (GP1BA/GP5/GP9) platelet agglutination. Locally activates the early events of an acute inflammatory response as leukocyte rolling and pro-inflammatory cytokine release. Functionally, the dimeric form jaracetin may be a dimeric form of jararhagin-C. It binds to von Willebrand factor (VWF) and induces its interaction with GPIbalpha (GP1BA) (via the vWF A1 domain), resulting in platelet aggregation. Also binds the alpha-2 subunit of the alpha-2/beta-1 (ITGA2/ITGB1) integrin. It potently induces platelet aggregation in citrated platelet-rich plasma. The chain is Zinc metalloproteinase-disintegrin-like jararhagin from Bothrops jararaca (Jararaca).